A 346-amino-acid polypeptide reads, in one-letter code: Tetraacyldisaccharide 4'-kinase (346 aa).

54–61 (TVGGAGKT) is a binding site for ATP.

It belongs to the LpxK family.

It carries out the reaction a lipid A disaccharide + ATP = a lipid IVA + ADP + H(+). It functions in the pathway glycolipid biosynthesis; lipid IV(A) biosynthesis; lipid IV(A) from (3R)-3-hydroxytetradecanoyl-[acyl-carrier-protein] and UDP-N-acetyl-alpha-D-glucosamine: step 6/6. Transfers the gamma-phosphate of ATP to the 4'-position of a tetraacyldisaccharide 1-phosphate intermediate (termed DS-1-P) to form tetraacyldisaccharide 1,4'-bis-phosphate (lipid IVA). The polypeptide is Tetraacyldisaccharide 4'-kinase (Rhizobium meliloti (strain 1021) (Ensifer meliloti)).